The following is an 81-amino-acid chain: Photosystem I iron-sulfur center (81 aa).

2 consecutive 4Fe-4S ferredoxin-type domains span residues 2 to 31 (SHKI…MIPW) and 39 to 68 (IASA…VRVY). The [4Fe-4S] cluster site is built by C11, C14, C17, C21, C48, C51, C54, and C58.

As to quaternary structure, the eukaryotic PSI reaction center is composed of at least 11 subunits. The cofactor is [4Fe-4S] cluster.

The protein resides in the plastid. It localises to the chloroplast thylakoid membrane. The catalysed reaction is reduced [plastocyanin] + hnu + oxidized [2Fe-2S]-[ferredoxin] = oxidized [plastocyanin] + reduced [2Fe-2S]-[ferredoxin]. Apoprotein for the two 4Fe-4S centers FA and FB of photosystem I (PSI); essential for photochemical activity. FB is the terminal electron acceptor of PSI, donating electrons to ferredoxin. The C-terminus interacts with PsaA/B/D and helps assemble the protein into the PSI complex. Required for binding of PsaD and PsaE to PSI. PSI is a plastocyanin-ferredoxin oxidoreductase, converting photonic excitation into a charge separation, which transfers an electron from the donor P700 chlorophyll pair to the spectroscopically characterized acceptors A0, A1, FX, FA and FB in turn. This Chara vulgaris (Common stonewort) protein is Photosystem I iron-sulfur center.